A 411-amino-acid polypeptide reads, in one-letter code: Arginine deiminase (411 aa).

The active-site Amidino-cysteine intermediate is C399.

This sequence belongs to the arginine deiminase family.

It localises to the cytoplasm. It carries out the reaction L-arginine + H2O = L-citrulline + NH4(+). The protein operates within amino-acid degradation; L-arginine degradation via ADI pathway; carbamoyl phosphate from L-arginine: step 1/2. In Latilactobacillus sakei subsp. sakei (strain 23K) (Lactobacillus sakei subsp. sakei), this protein is Arginine deiminase.